Consider the following 362-residue polypeptide: GDSL esterase/lipase At5g45670 (362 aa).

The first 23 residues, 1–23, serve as a signal peptide directing secretion; sequence MARMSLMIMMIMVAVTMINIAKS. Ser-36 (nucleophile) is an active-site residue. Catalysis depends on residues Asp-326 and His-329.

The protein belongs to the 'GDSL' lipolytic enzyme family.

It is found in the secreted. The protein is GDSL esterase/lipase At5g45670 of Arabidopsis thaliana (Mouse-ear cress).